Here is a 106-residue protein sequence, read N- to C-terminus: COX assembly mitochondrial protein homolog (106 aa).

The residue at position 2 (A2) is an N-acetylalanine. One can recognise a CHCH domain in the interval 28 to 71; that stretch reads RERCSEQVEDFTRCCKDSGILMVLKCRKENSALKDCLTAYYNDP. Short sequence motifs (cx9C motif) lie at residues 31–41 and 53–63; these read CSEQVEDFTRC and CRKENSALKDC. Cystine bridges form between C31–C63 and C41–C53.

This sequence belongs to the CMC family. Component of the MITRAC (mitochondrial translation regulation assembly intermediate of cytochrome c oxidase complex) complex, the core components of this complex being COA3/MITRAC12 and COX14.

The protein resides in the mitochondrion. In terms of biological role, component of the MITRAC (mitochondrial translation regulation assembly intermediate of cytochrome c oxidase complex) complex, that regulates cytochrome c oxidase assembly. The chain is COX assembly mitochondrial protein homolog (Cmc1) from Mus musculus (Mouse).